A 399-amino-acid polypeptide reads, in one-letter code: MIITSLLDTDLYKFTMMQVVLHHFPAANVEYRFRCRTPGVDLVPYIDEIRDEVRGLCSLRFTDIELDYLRRMRFIKSDFVDFLALFHLNEKYISITPSPKGNGEIDIVIEGPWLHTILFEIPVLAIVNEVYFRNTQREPDYREGRERLREKIKLLGAKPEFADCKIADYGTRRRFSKVWHEEVALTLRDGLGPQFAGTSNVFYAMKHELTPLGTMAHEYLQACQALGPRLRDSQTYGFEMWAKEYRGDLGIALSDVYGMDAFLNDFDMYFCKLFDGARHDSGDPFEWGERMLRHYEANRCDPRTKVLVFSDALDIPKVMQLYERFRNRCKLAFGVGTNLTNDLGYVPLQIVIKMVRCNGQPVAKLSDSPGKSMCDDRAYLAYLRQVFGIAQPVDDDASQ.

A Phosphohistidine; by autocatalysis modification is found at histidine 217.

Belongs to the NAPRTase family. Post-translationally, transiently phosphorylated on a His residue during the reaction cycle. Phosphorylation strongly increases the affinity for substrates and increases the rate of nicotinate D-ribonucleotide production. Dephosphorylation regenerates the low-affinity form of the enzyme, leading to product release.

The enzyme catalyses nicotinate + 5-phospho-alpha-D-ribose 1-diphosphate + ATP + H2O = nicotinate beta-D-ribonucleotide + ADP + phosphate + diphosphate. The protein operates within cofactor biosynthesis; NAD(+) biosynthesis; nicotinate D-ribonucleotide from nicotinate: step 1/1. Catalyzes the synthesis of beta-nicotinate D-ribonucleotide from nicotinate and 5-phospho-D-ribose 1-phosphate at the expense of ATP. The chain is Nicotinate phosphoribosyltransferase from Burkholderia ambifaria (strain MC40-6).